The following is a 170-amino-acid chain: Alpha-crystallin A chain (170 aa).

N-acetylmethionine is present on methionine 1. The required for complex formation with BFSP1 and BFSP2 stretch occupies residues 1-63; that stretch reads MDVTIQHPWF…RTVLDSGISE (63 aa). The residue at position 6 (glutamine 6) is a Deamidated glutamine; partial. Serine 45 carries the post-translational modification Phosphoserine. A Deamidated glutamine; partial modification is found at glutamine 50. The 110-residue stretch at 52-161 folds into the sHSP domain; the sequence is LFRTVLDSGI…SERTIPVSRE (110 aa). An N6-acetyllysine mark is found at lysine 70 and lysine 99. Histidine 100 provides a ligand contact to Zn(2+). At asparagine 101 the chain carries Deamidated asparagine; partial. Positions 102, 107, and 151 each coordinate Zn(2+). The disordered stretch occupies residues 144-170; the sequence is PKIVDPSHSERTIPVSREEKPSSAPSS. The segment covering 148-164 has biased composition (basic and acidic residues); it reads DPSHSERTIPVSREEKP. Serine 159 carries O-linked (GlcNAc) serine glycosylation.

This sequence belongs to the small heat shock protein (HSP20) family. As to quaternary structure, heteromer composed of three CRYAA and one CRYAB subunits. Inter-subunit bridging via zinc ions enhances stability, which is crucial as there is no protein turn over in the lens. Can also form homodimers and homotetramers (dimers of dimers) which serve as the building blocks of homooligomers. Within homooligomers, the zinc-binding motif is created from residues of 3 different molecules. His-100 and Glu-102 from one molecule are ligands of the zinc ion, and His-107 and His-151 residues from additional molecules complete the site with tetrahedral coordination geometry. Part of a complex required for lens intermediate filament formation composed of BFSP1, BFSP2 and CRYAA. Post-translationally, acetylation at Lys-70 may increase chaperone activity. In terms of processing, undergoes age-dependent proteolytical cleavage at the C-terminus.

Its subcellular location is the cytoplasm. It localises to the nucleus. Functionally, contributes to the transparency and refractive index of the lens. Acts as a chaperone, preventing aggregation of various proteins under a wide range of stress conditions. Required for the correct formation of lens intermediate filaments as part of a complex composed of BFSP1, BFSP2 and CRYAA. The protein is Alpha-crystallin A chain (CRYAA) of Choloepus hoffmanni (Hoffmann's two-fingered sloth).